Consider the following 616-residue polypeptide: ATP-dependent RNA helicase VAD1 (616 aa).

Residues 1-35 (MASSSTLANDDWKQGLAAPPKDLRPQTEDVTATQG) form a disordered region. Residues 36 to 64 (SRFEDFGLRRELLMGIYTAGFERPSPIQE) carry the Q motif motif. Positions 67–238 (IPMALTGRDI…DQHMVQPYEI (172 aa)) constitute a Helicase ATP-binding domain. Residue 80–87 (AKNGTGKT) coordinates ATP. The DEAD box motif lies at 186–189 (DEAD). The Helicase C-terminal domain occupies 248 to 408 (GVTQYYAYVE…PIPAVIDPVL (161 aa)). The disordered stretch occupies residues 416-616 (EEERESPPPK…GASQSQQAQA (201 aa)). 3 stretches are compositionally biased toward low complexity: residues 427-441 (AAIA…PQQR), 458-500 (PAAA…NSSP), and 508-523 (YPQQ…AQMQ). Residues 529-545 (PATQPQASAQIPVQGQT) are compositionally biased toward polar residues. 2 stretches are compositionally biased toward low complexity: residues 550–579 (PRAQ…PNTG) and 606–616 (AGASQSQQAQA).

Belongs to the DEAD box helicase family. DDX6/DHH1 subfamily.

It localises to the cytoplasm. It is found in the P-body. It carries out the reaction ATP + H2O = ADP + phosphate + H(+). Functionally, ATP-dependent RNA helicase involved in mRNA turnover, and more specifically in mRNA decapping. Is involved in G1/S DNA-damage checkpoint recovery, probably through the regulation of the translational status of a subset of mRNAs. May also have a role in translation and mRNA nuclear export. Blocks autophagy in nutrient-rich conditions by, at least partly, binding and repressing the expression of a set of ATG genes, including ATG3, ATG7, ATG8, ATG19, ATG20 and ATG22. VAD1-mediated repression of autophagy is regulated by TOR-dependent phosphorylation of the decapping enzyme DCP2. Regulates multiple virulence-associated genes. Repression of autophagy by VAD1 also regulates the pathogenesis. The sequence is that of ATP-dependent RNA helicase VAD1 from Cryptococcus neoformans var. grubii serotype A (strain H99 / ATCC 208821 / CBS 10515 / FGSC 9487) (Filobasidiella neoformans var. grubii).